A 60-amino-acid chain; its full sequence is Large ribosomal subunit protein uL30 (60 aa).

This sequence belongs to the universal ribosomal protein uL30 family. Part of the 50S ribosomal subunit.

In Levilactobacillus brevis (strain ATCC 367 / BCRC 12310 / CIP 105137 / JCM 1170 / LMG 11437 / NCIMB 947 / NCTC 947) (Lactobacillus brevis), this protein is Large ribosomal subunit protein uL30.